We begin with the raw amino-acid sequence, 416 residues long: Glutamyl-tRNA reductase (416 aa).

Substrate contacts are provided by residues 49–52, Ser-105, 110–112, and Gln-116; these read TCNR and EPQ. Residue Cys-50 is the Nucleophile of the active site. 185–190 contacts NADP(+); it reads GAGETI.

The protein belongs to the glutamyl-tRNA reductase family. As to quaternary structure, homodimer.

The catalysed reaction is (S)-4-amino-5-oxopentanoate + tRNA(Glu) + NADP(+) = L-glutamyl-tRNA(Glu) + NADPH + H(+). Its pathway is porphyrin-containing compound metabolism; protoporphyrin-IX biosynthesis; 5-aminolevulinate from L-glutamyl-tRNA(Glu): step 1/2. In terms of biological role, catalyzes the NADPH-dependent reduction of glutamyl-tRNA(Glu) to glutamate 1-semialdehyde (GSA). The protein is Glutamyl-tRNA reductase of Shewanella baltica (strain OS223).